Consider the following 292-residue polypeptide: Short chain dehydrogenases/reductase notP' (292 aa).

The tract at residues 1–25 (MPQTSDGNVHAPQYREAKPSQGDPS) is disordered. NADP(+) is bound by residues Leu-48, Asp-97, Lys-158, Tyr-193, Lys-197, Ile-230, and Thr-232. Tyr-193 functions as the Proton donor in the catalytic mechanism. The active-site Lowers pKa of active site Tyr is the Lys-197.

It belongs to the short-chain dehydrogenases/reductases (SDR) family.

Functionally, short chain dehydrogenases/reductase; part of the gene cluster that mediates the biosynthesis of notoamide, a fungal indole alkaloid that belongs to a family of natural products containing a characteristic bicyclo[2.2.2]diazaoctane core. The first step of notoamide biosynthesis involves coupling of L-proline and L-tryptophan by the bimodular NRPS notE', to produce cyclo-L-tryptophan-L-proline called brevianamide F. The reverse prenyltransferase notF' then acts as a deoxybrevianamide E synthase and converts brevianamide F to deoxybrevianamide E via reverse prenylation at C-2 of the indole ring leading to the bicyclo[2.2.2]diazaoctane core. Deoxybrevianamide E is further hydroxylated at C-6 of the indole ring, likely catalyzed by the cytochrome P450 monooxygenase notG', to yield 6-hydroxy-deoxybrevianamide E. 6-hydroxy-deoxybrevianamide E is a specific substrate of the prenyltransferase notC' for normal prenylation at C-7 to produce 6-hydroxy-7-prenyl-deoxybrevianamide, also called notoamide S. As the proposed pivotal branching point in notoamide biosynthesis, notoamide S can be diverted to notoamide E through an oxidative pyran ring closure putatively catalyzed by either notH' cytochrome P450 monooxygenase or the notD' FAD-linked oxidoreductase. This step would be followed by an indole 2,3-epoxidation-initiated pinacol-like rearrangement catalyzed by the notB' FAD-dependent monooxygenase leading to the formation of notoamide C and notoamide D. On the other hand notoamide S is converted to notoamide T by notH' (or notD'), a bifunctional oxidase that also functions as the intramolecular Diels-Alderase responsible for generation of (-)-notoamide T. To generate antipodal (+)-notoaminide T, notH (or notD) in Aspergillus strain MF297-2 is expected to catalyze a Diels-Alder reaction leading to the opposite stereochemistry. The remaining oxidoreductase notD' (or notH') likely catalyzes the oxidative pyran ring formation to yield (-)-stephacidin A. The FAD-dependent monooxygenase notI' is highly similar to notB' and is predicted to catalyze a similar conversion from (-)-stephacidin A to (+)-notoamide B via the 2,3-epoxidation of (-)-stephacidin A followed by a pinacol-type rearrangement. Finally, it remains unclear which enzyme could be responsible for the final hydroxylation steps leading to notoamide A and sclerotiamide. The function of notP' in the notoamide biosynthesis has not been determined yet. This is Short chain dehydrogenases/reductase notP' from Aspergillus versicolor.